We begin with the raw amino-acid sequence, 109 residues long: FK506-binding protein (109 aa).

One can recognise a PPIase FKBP-type domain in the interval 20–108 (GKEITVHYTG…IFEVELLKVY (89 aa)).

The protein belongs to the FKBP-type PPIase family.

The catalysed reaction is [protein]-peptidylproline (omega=180) = [protein]-peptidylproline (omega=0). In terms of biological role, PPIases accelerate the folding of proteins. The chain is FK506-binding protein (fbp) from Neisseria meningitidis serogroup C.